A 206-amino-acid polypeptide reads, in one-letter code: 3-isopropylmalate dehydratase small subunit (206 aa).

It belongs to the LeuD family. LeuD type 1 subfamily. Heterodimer of LeuC and LeuD.

The catalysed reaction is (2R,3S)-3-isopropylmalate = (2S)-2-isopropylmalate. It functions in the pathway amino-acid biosynthesis; L-leucine biosynthesis; L-leucine from 3-methyl-2-oxobutanoate: step 2/4. Its function is as follows. Catalyzes the isomerization between 2-isopropylmalate and 3-isopropylmalate, via the formation of 2-isopropylmaleate. The polypeptide is 3-isopropylmalate dehydratase small subunit (Acidobacterium capsulatum (strain ATCC 51196 / DSM 11244 / BCRC 80197 / JCM 7670 / NBRC 15755 / NCIMB 13165 / 161)).